The chain runs to 212 residues: Floral homeotic protein PMADS 2 (212 aa).

An MADS-box domain is found at 3–58 (RGKIEIKRIENSSNRQVTYSKRRNGIIKKAKEITVLCDAKVSLIIFGNSGKMHEYC). Positions 84-170 (HENLSNEIDR…QYALHQKEMA (87 aa)) constitute a K-box domain.

As to expression, predominantly expressed in petals and stamens, less in carpels and sepals.

The protein resides in the nucleus. In terms of biological role, transcription factor involved in the genetic control of flower development. The sequence is that of Floral homeotic protein PMADS 2 (PMADS2) from Petunia hybrida (Petunia).